Here is a 376-residue protein sequence, read N- to C-terminus: MESNVNDEIEKAFAKDSELAKDIIKQYGKTKSIQPLVHRICKYINTLQKENESGQVKEAGSLKRKDRVQHELGQLVYGVLNLSFQAPMRKKLDVYIYENGIAVTLPGEPNLIEFWLPWNEIRCAIHVPCPRKANVQNNFVIILKSESSAENIVSSDNVKEPVFFTAPYPLKKLNLVEGLRSFTHCTNSWDIFRDYFEFIGTSTLSPSVEEFVCPNPQTGDNGTTYGVEANYKAKDGHLFFLRTGILWGFRKPILFIELASIQHFSYSNVLQRTFTVNFEAGGTIYSFDMVDQSVFRAVNDYATKHGLMDSSLAEEKAAPVPKNPSVSYLNEASSLENVDDMDDIDVKEPLFSDNDEDVENSDSEDGSESIGSEDEE.

Residues 334–376 (SLENVDDMDDIDVKEPLFSDNDEDVENSDSEDGSESIGSEDEE) form a disordered region. Residues 353 to 376 (DNDEDVENSDSEDGSESIGSEDEE) show a composition bias toward acidic residues.

The protein belongs to the RTT106 family.

Functionally, has a role in meiosis. In Schizosaccharomyces pombe (strain 972 / ATCC 24843) (Fission yeast), this protein is Meiotically up-regulated gene 183 protein (mug183).